The primary structure comprises 265 residues: Glutamate racemase (265 aa).

Substrate contacts are provided by residues 13-14 and 45-46; these read DS and YG. Cysteine 77 (proton donor/acceptor) is an active-site residue. 78–79 is a substrate binding site; the sequence is NT. The Proton donor/acceptor role is filled by cysteine 185. Position 186–187 (186–187) interacts with substrate; that stretch reads TH.

This sequence belongs to the aspartate/glutamate racemases family.

It carries out the reaction L-glutamate = D-glutamate. It functions in the pathway cell wall biogenesis; peptidoglycan biosynthesis. Its function is as follows. Provides the (R)-glutamate required for cell wall biosynthesis. This chain is Glutamate racemase, found in Vibrio cholerae serotype O1 (strain ATCC 39315 / El Tor Inaba N16961).